Reading from the N-terminus, the 100-residue chain is Large ribosomal subunit protein bL28 (100 aa).

This sequence belongs to the bacterial ribosomal protein bL28 family.

The protein is Large ribosomal subunit protein bL28 of Methylobacterium radiotolerans (strain ATCC 27329 / DSM 1819 / JCM 2831 / NBRC 15690 / NCIMB 10815 / 0-1).